The following is a 125-amino-acid chain: MADLQKIVDDLSALTVLEAAELAKLLEEKWGVSAAAAVAVAAAPGAGGGAPAAEEKTEFTVVLAAAGDKKIEVIKEVRAITGLGLKEAKDLVEGAPKPVKEGVAKDEAEKIKAQLEKAGGKVELK.

Belongs to the bacterial ribosomal protein bL12 family. As to quaternary structure, homodimer. Part of the ribosomal stalk of the 50S ribosomal subunit. Forms a multimeric L10(L12)X complex, where L10 forms an elongated spine to which 2 to 4 L12 dimers bind in a sequential fashion. Binds GTP-bound translation factors.

In terms of biological role, forms part of the ribosomal stalk which helps the ribosome interact with GTP-bound translation factors. Is thus essential for accurate translation. The polypeptide is Large ribosomal subunit protein bL12 (Nitrobacter winogradskyi (strain ATCC 25391 / DSM 10237 / CIP 104748 / NCIMB 11846 / Nb-255)).